The following is a 264-amino-acid chain: Apolipoprotein A-I (264 aa).

The N-terminal stretch at 1–18 is a signal peptide; that stretch reads MKAVVLAVAVLFLTGSQA. 2 consecutive repeat copies span residues 67–88 and 89–110. Residues 67–264 form a 10 X approximate tandem repeats region; that stretch reads LNLLENWDTL…DQITKHVTTQ (198 aa). A Methionine sulfoxide modification is found at Met109. Residues 111–121 form a 3; half-length repeat; it reads KDLEKVKKKVQ. 3 repeat units span residues 122 to 143, 144 to 165, and 166 to 187. One copy of the 7; truncated repeat lies at 188-207; it reads TYTEEMGQILAERLGAIKES. Met193 carries the post-translational modification Methionine sulfoxide. The stretch at 208–229 is repeat 8; it reads TSLAEYQTKASEHLRTFSKKAK. A 9; half-length repeat occupies 230–240; the sequence is PILEDLRQGLL. Residues 241–264 form repeat 10; sequence PVAENFKTNIKNTFDQITKHVTTQ.

The protein belongs to the apolipoprotein A1/A4/E family. As to quaternary structure, homodimer. Interacts with APOA1BP and CLU. Component of a sperm activating protein complex (SPAP), consisting of APOA1, an immunoglobulin heavy chain, an immunoglobulin light chain and albumin. Interacts with NDRG1. Interacts with SCGB3A2. Interacts with NAXE and YJEFN3. Post-translationally, glycosylated. In terms of processing, palmitoylated. Phosphorylation sites are present in the extracellular medium.

The protein localises to the secreted. In terms of biological role, participates in the reverse transport of cholesterol from tissues to the liver for excretion by promoting cholesterol efflux from tissues and by acting as a cofactor for the lecithin cholesterol acyltransferase (LCAT). As part of the SPAP complex, activates spermatozoa motility. This chain is Apolipoprotein A-I (Apoa1), found in Fukomys damarensis (Damaraland mole rat).